We begin with the raw amino-acid sequence, 147 residues long: Ribonuclease 4 (147 aa).

The first 28 residues, 1–28, serve as a signal peptide directing secretion; that stretch reads MALQRTQAFLLLLLLTLLGLGLVQPSYG. Pyrrolidone carboxylic acid is present on Gln29. DUMP contacts are provided by Arg35, His40, Lys68, Asn71, and Thr72. Residue His40 is the Proton acceptor of the active site. 4 disulfide bridges follow: Cys53–Cys109, Cys67–Cys120, Cys85–Cys135, and Cys92–Cys99. His144 acts as the Proton donor in catalysis. Position 145 (Phe145) interacts with dUMP.

The protein belongs to the pancreatic ribonuclease family.

The protein resides in the secreted. Its function is as follows. Cleaves preferentially after uridine bases. Has antimicrobial activity against uropathogenic E.coli (UPEC). Probably contributes to urinary tract sterility. This Bos taurus (Bovine) protein is Ribonuclease 4 (RNASE4).